The chain runs to 464 residues: AAC-rich mRNA clone AAC11 protein (464 aa).

The span at 1 to 15 (MSTPTLPNLSQLHGI) shows a compositional bias: polar residues. Disordered regions lie at residues 1–112 (MSTP…HGTN) and 125–464 (SLPQ…SFFH). 3 stretches are compositionally biased toward low complexity: residues 16-65 (QNQS…QQPQ), 78-88 (NPNGLGLMGHN), and 130-160 (INNN…NNSN). The span at 161–174 (LGINSSPTQSSANS) shows a compositional bias: polar residues. DNA-binding regions (a.T hook) lie at residues 177 to 189 (KRSR…NPPS), 198 to 210 (KRKR…MDEE), and 224 to 236 (NKKR…PKDE). Over residues 240-253 (DYNNTSFSDSNTDG) the composition is skewed to polar residues. The segment at residues 255-267 (PKKRGRPPKAKGD) is a DNA-binding region (a.T hook 4). The span at 276-428 (NTLGNGILNS…NNAGNLGNLG (153 aa)) shows a compositional bias: low complexity. Polar residues predominate over residues 433-464 (LHSSDPNNPNAQKSFPDSTNTMDFQPNFSFFH).

The polypeptide is AAC-rich mRNA clone AAC11 protein (AAC11) (Dictyostelium discoideum (Social amoeba)).